The primary structure comprises 493 residues: Glutamyl-tRNA(Gln) amidotransferase subunit A (493 aa).

Active-site charge relay system residues include Lys78 and Ser158. Catalysis depends on Ser182, which acts as the Acyl-ester intermediate.

Belongs to the amidase family. GatA subfamily. In terms of assembly, heterotrimer of A, B and C subunits.

It catalyses the reaction L-glutamyl-tRNA(Gln) + L-glutamine + ATP + H2O = L-glutaminyl-tRNA(Gln) + L-glutamate + ADP + phosphate + H(+). Allows the formation of correctly charged Gln-tRNA(Gln) through the transamidation of misacylated Glu-tRNA(Gln) in organisms which lack glutaminyl-tRNA synthetase. The reaction takes place in the presence of glutamine and ATP through an activated gamma-phospho-Glu-tRNA(Gln). This chain is Glutamyl-tRNA(Gln) amidotransferase subunit A, found in Beijerinckia indica subsp. indica (strain ATCC 9039 / DSM 1715 / NCIMB 8712).